The following is a 168-amino-acid chain: MRTILNKLNINGEIMLIKDIMKKPIVVYEDNDLIDVIRLFRKNKISGAPVLNKDGKLVGIISESDIVKTIVTHNEDLNLILPSPLDLIELPLKTALKIEEFMEDLKNALKTKVRDVMTRKVIVAKPDMTINDAAKLMVKNNIKRLPVVDDEGNLIGIVTRGDLIEALI.

CBS domains follow at residues isoleucine 20–leucine 77 and methionine 117–isoleucine 168.

This is an uncharacterized protein from Methanocaldococcus jannaschii (strain ATCC 43067 / DSM 2661 / JAL-1 / JCM 10045 / NBRC 100440) (Methanococcus jannaschii).